The sequence spans 235 residues: SMN complex subunit yip11/gem2 (235 aa).

The interval 1–34 (MPSKRKRNPLQYQTSGSLDEETNQRSAFPQIDNN) is disordered. Residues 24-34 (QRSAFPQIDNN) show a composition bias toward polar residues. 2 positions are modified to phosphoserine: Ser-117 and Ser-118.

It belongs to the gemin-2 family. As to quaternary structure, part of the core SMN complex at least composed of smn1, yip11/gem2, gem6, gem7 and gem8. Interacts with smn1; the interaction is direct.

It is found in the nucleus. The SMN complex catalyzes the assembly of small nuclear ribonucleoproteins (snRNPs), the building blocks of the spliceosome, and thereby plays an important role in the splicing of cellular pre-mRNAs. Most spliceosomal snRNPs contain a common set of Sm proteins smb1, smd1, smd2, smd3, sme1, smf1 and smg1 that assemble in a heptameric protein ring on the Sm site of the small nuclear RNA to form the core snRNP. In the cytosol, the Sm proteins smd1, smd2, sme1, smf1 and smg1 (5Sm) are trapped in an inactive 6S pICln-Sm complex by the chaperone saf5. To complete assembly of core snRNPs, the SMN complex accepts 5Sm from saf5. Binding of snRNA inside 5Sm ultimately triggers eviction of the SMN complex, thereby allowing binding of smd3 and smb1 to complete assembly of the core snRNP. Within the SMN complex, yip11/gem2 constrains the conformation of 5Sm, thereby promoting 5Sm binding to snRNA containing the snRNP code (a nonameric Sm site and a 3'-adjacent stem-loop), thus preventing progression of assembly until a cognate substrate is bound. This chain is SMN complex subunit yip11/gem2 (yip11), found in Schizosaccharomyces pombe (strain 972 / ATCC 24843) (Fission yeast).